The primary structure comprises 231 residues: Protoporphyrinogen IX dehydrogenase [quinone] (231 aa).

The Flavodoxin-like domain occupies 8–178 (CLMLYSTTDG…AVRRFASDFA (171 aa)). FMN contacts are provided by residues 14–18 (TTDGH) and 90–158 (FFSV…ETDS). Residues 208-228 (CLLAIVGMSAAVIVGIRIIAA) traverse the membrane as a helical segment.

This sequence belongs to the HemG family. Requires FMN as cofactor.

The protein resides in the membrane. It carries out the reaction protoporphyrinogen IX + 3 a menaquinone = protoporphyrin IX + 3 a menaquinol. The enzyme catalyses protoporphyrinogen IX + 3 a ubiquinone = protoporphyrin IX + 3 a ubiquinol. It catalyses the reaction protoporphyrinogen IX + 3 a quinone = protoporphyrin IX + 3 a quinol. Its pathway is porphyrin-containing compound metabolism; protoporphyrin-IX biosynthesis; protoporphyrin-IX from protoporphyrinogen-IX: step 1/1. Functionally, in E.coli extracts under anerobic conditions catalyzes the 6-electron oxidation of protoporphyrinogen IX to form protoporphyrin IX, transferring electrons to fumarate reductase, presumably via menaquinone. In vitro under aerobic conditions forms protoporphyrin IX using ubiquinone as an electron acceptor. Complements an E.coli hemG deletion, allowing normal growth in vivo. This Leishmania major protein is Protoporphyrinogen IX dehydrogenase [quinone].